We begin with the raw amino-acid sequence, 730 residues long: GTPase-activating protein GYP7 (730 aa).

Residues 434–619 (VQEDKERDDF…RLWEVLWTDY (186 aa)) form the Rab-GAP TBC domain.

Functionally, most effectively accelerate the intrinsic GTPase activity of YPT7. It is also active, but to a lesser extent, on YPT31, YPT32 and YPT1. YPT6 and SEC4. The sequence is that of GTPase-activating protein GYP7 (GYP7) from Yarrowia lipolytica (strain CLIB 122 / E 150) (Yeast).